The primary structure comprises 441 residues: MRLSRYFMPTLRETPKEAEIVSHRLMLRAGLVRQEAAGIYAWLPLGLRVLERVCAVIRREQDRSGAVEILMPTVQSAELWRESGRYDAYGKEMLRLKDRHDREMLYGPTAEEMVTEIFRASVRSYKDLPKNLYQISWKFRDEVRPRFGTMRSREFLMKDAYSFDFDQAGARHAYNRMFVAYLRTFAGLGLKAIPMRADTGPIGGDLSHEFIILAKTGESEVFCDKAYLGFDIPPATVDFDDVAALQGIVDAWTSHYAATEEMHEPAAFAEVPEDSRMAARGIEVGHIFYFGTKYSEPMGAKVAGPDGIERPVHMGSYGIGPSRLVAAIIEASHDEAGIIWPDAVAPFDVALINLKVGDSATEAACAQIQSDLEAAGLSVLYDDRDERPGAKFATADLIGLPWQVIVGPKGLAEGKVELKRRAGGERESLATVDLLARIRRV.

This sequence belongs to the class-II aminoacyl-tRNA synthetase family. ProS type 2 subfamily. Homodimer.

The protein resides in the cytoplasm. The catalysed reaction is tRNA(Pro) + L-proline + ATP = L-prolyl-tRNA(Pro) + AMP + diphosphate. Catalyzes the attachment of proline to tRNA(Pro) in a two-step reaction: proline is first activated by ATP to form Pro-AMP and then transferred to the acceptor end of tRNA(Pro). The polypeptide is Proline--tRNA ligase (Methylobacterium radiotolerans (strain ATCC 27329 / DSM 1819 / JCM 2831 / NBRC 15690 / NCIMB 10815 / 0-1)).